The chain runs to 136 residues: Small ribosomal subunit protein uS8c (136 aa).

It belongs to the universal ribosomal protein uS8 family. Part of the 30S ribosomal subunit.

The protein resides in the plastid. It localises to the chloroplast. In terms of biological role, one of the primary rRNA binding proteins, it binds directly to 16S rRNA central domain where it helps coordinate assembly of the platform of the 30S subunit. The sequence is that of Small ribosomal subunit protein uS8c (rps8) from Citrus sinensis (Sweet orange).